Reading from the N-terminus, the 196-residue chain is MTWQNDYSRDYEVENHMECQNRSDKYIWSPHDAYFYKGLSELIVDIDRLIYLSLEKIRKDFVFINLNTDSLTEFINRDNEWLSAVKGKQVVLIAARKSEALANYWYYNSNIRGVVYAGLSRDIRKELAYVINGRFLRKDIKKDKITDREMEIIRMTAQGMLPKSIARIENCSVKTVYTHRRNAEAKLYSKLYKLVQ.

One can recognise an HTH luxR-type domain in the interval 138–196; the sequence is KDIKKDKITDREMEIIRMTAQGMLPKSIARIENCSVKTVYTHRRNAEAKLYSKLYKLVQ. The H-T-H motif DNA-binding region spans 162–181; the sequence is PKSIARIENCSVKTVYTHRR.

The protein belongs to the EcpR/MatA family.

It is found in the cytoplasm. Part of the ecpRABCDE operon, which encodes the E.coli common pilus (ECP). ECP is found in both commensal and pathogenic strains and plays a dual role in early-stage biofilm development and host cell recognition. Positively regulates the expression of the ecp operon by binding to two TTCCT boxes. The polypeptide is HTH-type transcriptional regulator EcpR (ecpR) (Escherichia coli O157:H7).